Here is a 101-residue protein sequence, read N- to C-terminus: Co-chaperonin GroES (101 aa).

Belongs to the GroES chaperonin family. As to quaternary structure, heptamer of 7 subunits arranged in a ring. Interacts with the chaperonin GroEL.

The protein resides in the cytoplasm. Functionally, together with the chaperonin GroEL, plays an essential role in assisting protein folding. The GroEL-GroES system forms a nano-cage that allows encapsulation of the non-native substrate proteins and provides a physical environment optimized to promote and accelerate protein folding. GroES binds to the apical surface of the GroEL ring, thereby capping the opening of the GroEL channel. The chain is Co-chaperonin GroES from Lawsonia intracellularis.